We begin with the raw amino-acid sequence, 94 residues long: Co-chaperonin GroES (94 aa).

It belongs to the GroES chaperonin family. Heptamer of 7 subunits arranged in a ring. Interacts with the chaperonin GroEL.

The protein localises to the cytoplasm. Functionally, together with the chaperonin GroEL, plays an essential role in assisting protein folding. The GroEL-GroES system forms a nano-cage that allows encapsulation of the non-native substrate proteins and provides a physical environment optimized to promote and accelerate protein folding. GroES binds to the apical surface of the GroEL ring, thereby capping the opening of the GroEL channel. In Clostridium kluyveri (strain NBRC 12016), this protein is Co-chaperonin GroES.